Consider the following 258-residue polypeptide: UPF0246 protein mma_1385 (258 aa).

Belongs to the UPF0246 family.

This Janthinobacterium sp. (strain Marseille) (Minibacterium massiliensis) protein is UPF0246 protein mma_1385.